The sequence spans 396 residues: Phosphoglycerate kinase (396 aa).

Substrate is bound by residues 19–21, Arg-34, 57–60, Arg-116, and Arg-153; these read DFN and HLGK. ATP is bound by residues Lys-204, Glu-324, and 351-354; that span reads GGDT.

It belongs to the phosphoglycerate kinase family. Monomer.

Its subcellular location is the cytoplasm. It carries out the reaction (2R)-3-phosphoglycerate + ATP = (2R)-3-phospho-glyceroyl phosphate + ADP. It functions in the pathway carbohydrate degradation; glycolysis; pyruvate from D-glyceraldehyde 3-phosphate: step 2/5. In Maridesulfovibrio salexigens (strain ATCC 14822 / DSM 2638 / NCIMB 8403 / VKM B-1763) (Desulfovibrio salexigens), this protein is Phosphoglycerate kinase.